The following is a 226-amino-acid chain: UPF0502 protein Gbem_0194 (226 aa).

Belongs to the UPF0502 family.

The protein is UPF0502 protein Gbem_0194 of Citrifermentans bemidjiense (strain ATCC BAA-1014 / DSM 16622 / JCM 12645 / Bem) (Geobacter bemidjiensis).